The sequence spans 597 residues: Integrator complex subunit 11 (597 aa).

The Zn(2+) site is built by histidine 68, histidine 70, aspartate 72, histidine 73, histidine 157, and aspartate 178. The HXHXDH motif motif lies at 68-73 (HFHLDH). Glutamate 203 is a catalytic residue. Histidine 414 contributes to the Zn(2+) binding site. Lysine 462 contributes to the 1D-myo-inositol hexakisphosphate binding site.

The protein belongs to the metallo-beta-lactamase superfamily. RNA-metabolizing metallo-beta-lactamase-like family. INTS11 subfamily. As to quaternary structure, belongs to the multiprotein complex Integrator, at least composed of IntS1, IntS2, IntS3, IntS4, omd/IntS5, IntS6, defl/IntS7, IntS8, IntS9, IntS10, IntS11, IntS12, asun/IntS13, IntS14 and IntS15. The core complex associates with protein phosphatase 2A subunits mts/PP2A and Pp2A-29B, to form the Integrator-PP2A (INTAC) complex. IntS11 is part of the RNA endonuclease subcomplex, composed of IntS4, IntS9, IntS11 and inositol hexakisphosphate (InsP6). Interacts with Brat1; interaction is required for the assembly of the RNA endonuclease subcomplex and inhibits the endonuclease activity of IntS11 before formation of mature integrator complex. Zn(2+) is required as a cofactor. Expressed in neurons and glia of the larval and adult brain.

It localises to the nucleus. Its subcellular location is the cytoplasm. The protein resides in the cytosol. Its activity is regulated as follows. The RNA endonuclease activity is inhibited by Brat1 that forms hyrogen bond and hydrophobic interactions with the active site. Functionally, RNA endonuclease component of the integrator complex, a multiprotein complex that terminates RNA polymerase II (Pol II) transcription in the promoter-proximal region of genes. The integrator complex provides a quality checkpoint during transcription elongation by driving premature transcription termination of transcripts that are unfavorably configured for transcriptional elongation: the complex terminates transcription by (1) catalyzing dephosphorylation of the C-terminal domain (CTD) of Pol II subunit Polr2A/Rbp1 and Spt5, and (2) degrading the exiting nascent RNA transcript via endonuclease activity. The integrator complex is also involved in the 3'-end processing of the U7 snRNA, and also the spliceosomal snRNAs U1, U2, U4 and U5. Within the integrator complex, IntS11 constitutes the RNA endonuclease subunit that degrades exiting nascent RNA transcripts. The protein is Integrator complex subunit 11 of Drosophila melanogaster (Fruit fly).